A 548-amino-acid chain; its full sequence is MASKEILFDVKAREKLSRGVDKLANAVKVTLGPKGRNVVIEKSFGSPVITKDGVTVAKEIELEDKFENMGAQMVKEVASKTSDIAGDGTTTATILAQAIYREGVKLVAAGRSPMAIKRGIDKAVEKLVKELGTLAKPTRDQKEIAQIGTISANSDTTIGNIIAEAMAKVGKEGVITVEEAKGLETTLEVVEGMQFDRGYLSPYFVTDPEKMICELDEPFILCNEKKISSMKDMLPVLEQVAKMNRPLVIIAEDVEGEALATLVVNKLRGTLQVVAVKAPGFGDRRKAMLQDIAVLTGGTVVSEDMGVKLENISVADLGTAKRVVVDKENTTIVDGAGKSEDIKARVKQIRAQIDETTSDYDREKLQERLAKLVGGVAVINVGAATETEMKEKKDRVEDALNATRAAVEEGIVPGGGTAYIRISRVLDDVKPADDDEAAGVNIIRRAIEEPLRQISSNAGYEGSIVVEKVRDGKDGFGFNAASGEFEDLIKAGVIDPKKVTRIALQNAASVASLLLTTECAIAEKPEAKKDMPMPGGGMGGMGGMGGMY.

Residues Thr-30–Pro-33, Lys-51, Asp-87–Thr-91, Gly-415, Asn-479–Ala-481, and Asp-495 contribute to the ATP site.

This sequence belongs to the chaperonin (HSP60) family. As to quaternary structure, forms a cylinder of 14 subunits composed of two heptameric rings stacked back-to-back. Interacts with the co-chaperonin GroES.

Its subcellular location is the cytoplasm. It carries out the reaction ATP + H2O + a folded polypeptide = ADP + phosphate + an unfolded polypeptide.. Functionally, together with its co-chaperonin GroES, plays an essential role in assisting protein folding. The GroEL-GroES system forms a nano-cage that allows encapsulation of the non-native substrate proteins and provides a physical environment optimized to promote and accelerate protein folding. This Nitratidesulfovibrio vulgaris (strain DSM 19637 / Miyazaki F) (Desulfovibrio vulgaris) protein is Chaperonin GroEL.